Here is a 260-residue protein sequence, read N- to C-terminus: MAYVTMKGMLETGVHFGHQTRRWNPKMGTYIFGARNGIHIIDLQQTVKLFRTAHDKVVDTVARGGKVIFIGTKRQAQEAVQTEAGRAGQYYVTNRWMGGTLTNFQTIRKSIDRLKKLEVMFEDGTVNRYQKKEVLRLRREMDKLNLVLGGIKDMENLPQLAFIIDPNREDIAVKECRRLGIPIVAVTDTNCDPDLIDYVIPGNDDAIRAIKLFVGHIADACLEGEAMRKETKAENAEEAMKQAAEAEAEAAAPAAEESAE.

A compositionally biased stretch (basic and acidic residues) spans 228-240 (RKETKAENAEEAM). The interval 228 to 260 (RKETKAENAEEAMKQAAEAEAEAAAPAAEESAE) is disordered. The span at 241 to 260 (KQAAEAEAEAAAPAAEESAE) shows a compositional bias: low complexity.

It belongs to the universal ribosomal protein uS2 family.

This chain is Small ribosomal subunit protein uS2, found in Oleidesulfovibrio alaskensis (strain ATCC BAA-1058 / DSM 17464 / G20) (Desulfovibrio alaskensis).